The following is a 152-amino-acid chain: Small ribosomal subunit protein uS13A (152 aa).

It belongs to the universal ribosomal protein uS13 family. As to quaternary structure, component of the small ribosomal subunit (SSU). Mature yeast ribosomes consist of a small (40S) and a large (60S) subunit. The 40S small subunit contains 1 molecule of ribosomal RNA (18S rRNA) and at least 33 different proteins. The large 60S subunit contains 3 rRNA molecules (25S, 5.8S and 5S rRNA) and at least 46 different proteins.

It localises to the cytoplasm. Component of the ribosome, a large ribonucleoprotein complex responsible for the synthesis of proteins in the cell. The small ribosomal subunit (SSU) binds messenger RNAs (mRNAs) and translates the encoded message by selecting cognate aminoacyl-transfer RNA (tRNA) molecules. The large subunit (LSU) contains the ribosomal catalytic site termed the peptidyl transferase center (PTC), which catalyzes the formation of peptide bonds, thereby polymerizing the amino acids delivered by tRNAs into a polypeptide chain. The nascent polypeptides leave the ribosome through a tunnel in the LSU and interact with protein factors that function in enzymatic processing, targeting, and the membrane insertion of nascent chains at the exit of the ribosomal tunnel. The protein is Small ribosomal subunit protein uS13A (rps1801) of Schizosaccharomyces pombe (strain 972 / ATCC 24843) (Fission yeast).